We begin with the raw amino-acid sequence, 332 residues long: Malate dehydrogenase (332 aa).

NAD(+)-binding positions include 16 to 17 (QI), D43, and G90. Position 99 (R99) interacts with oxaloacetate. Residues Q113 and N132 each coordinate NAD(+). The oxaloacetate site is built by N132, R163, H188, and S243. H188 functions as the Proton acceptor in the catalytic mechanism.

The protein belongs to the LDH/MDH superfamily. MDH type 2 family. In terms of assembly, homodimer.

The protein localises to the cytoplasm. It carries out the reaction (S)-malate + NAD(+) = oxaloacetate + NADH + H(+). In terms of biological role, catalyzes the reduction of the carbonyl group of oxalacetic acid. No activity with pulegone. The chain is Malate dehydrogenase (MD1) from Nicotiana tabacum (Common tobacco).